The following is a 43-amino-acid chain: Delta-actitoxin-Bca1a (43 aa).

3 disulfide bridges follow: Cys-1–Cys-41, Cys-3–Cys-31, and Cys-24–Cys-42.

It localises to the secreted. Its subcellular location is the nematocyst. Its function is as follows. Binds specifically to voltage-gated sodium channels (Nav), thereby delaying their inactivation during signal transduction. Thus it strongly stimulates mammalian cardiac muscle contraction. This is Delta-actitoxin-Bca1a from Bunodosoma capense (Knobbly sea anemone).